The sequence spans 308 residues: Porphobilinogen deaminase (308 aa).

Cys241 carries the S-(dipyrrolylmethanemethyl)cysteine modification.

This sequence belongs to the HMBS family. Monomer. It depends on dipyrromethane as a cofactor.

The enzyme catalyses 4 porphobilinogen + H2O = hydroxymethylbilane + 4 NH4(+). It functions in the pathway porphyrin-containing compound metabolism; protoporphyrin-IX biosynthesis; coproporphyrinogen-III from 5-aminolevulinate: step 2/4. Its function is as follows. Tetrapolymerization of the monopyrrole PBG into the hydroxymethylbilane pre-uroporphyrinogen in several discrete steps. The chain is Porphobilinogen deaminase from Staphylococcus aureus (strain MRSA252).